The following is a 426-amino-acid chain: Histidine--tRNA ligase (426 aa).

This sequence belongs to the class-II aminoacyl-tRNA synthetase family. In terms of assembly, homodimer.

The protein localises to the cytoplasm. It catalyses the reaction tRNA(His) + L-histidine + ATP = L-histidyl-tRNA(His) + AMP + diphosphate + H(+). This chain is Histidine--tRNA ligase, found in Streptococcus pyogenes serotype M5 (strain Manfredo).